A 370-amino-acid chain; its full sequence is MSIDGILERAVNGERLSMEDAVKLYESDEVEKMGAAANQIMLKWHPEPITTFVIGRNVNYTNFCDTYCRFCAFYRAPGHKEGYVLDDEVILKKIQETIDVGGTEILMQGGTNPDLTIDYYTDLLRNIKERFPNIWMHSFSPAEVWKIAEVSSMSVEEVLRELHEAGLDSMPGGGAEILTEETRLRVSRLKITWEQWINAMKATKKVGMHGTATMVIGFGESFEERALHLQRVRDAQDETECFTAFISWLFQPENTGMYKTKKLTPRDYLKNVAISRLFLDNIPNFQSSWVTMGPEVGKLSLQYGCNDFGSTMIEENVVSAAGTTHKVNTNKILQLIREAGKIPAQRTTSYEIIRTFEDKEAAEKDFVMQN.

The 246-residue stretch at 50-295 (TTFVIGRNVN…QSSWVTMGPE (246 aa)) folds into the Radical SAM core domain. Residues cysteine 64, cysteine 68, and cysteine 71 each contribute to the [4Fe-4S] cluster site.

Belongs to the radical SAM superfamily. MqnC family. The cofactor is [4Fe-4S] cluster.

The catalysed reaction is dehypoxanthine futalosine + S-adenosyl-L-methionine = cyclic dehypoxanthinylfutalosinate + 5'-deoxyadenosine + L-methionine + H(+). It functions in the pathway quinol/quinone metabolism; menaquinone biosynthesis. Functionally, radical SAM enzyme that catalyzes the cyclization of dehypoxanthine futalosine (DHFL) into cyclic dehypoxanthine futalosine (CDHFL), a step in the biosynthesis of menaquinone (MK, vitamin K2). This Halalkalibacterium halodurans (strain ATCC BAA-125 / DSM 18197 / FERM 7344 / JCM 9153 / C-125) (Bacillus halodurans) protein is Cyclic dehypoxanthine futalosine synthase.